A 220-amino-acid chain; its full sequence is uncharacterized protein (220 aa).

This is an uncharacterized protein from Sinorhizobium fredii (strain NBRC 101917 / NGR234).